The chain runs to 210 residues: Orotate phosphoribosyltransferase (210 aa).

5-phospho-alpha-D-ribose 1-diphosphate-binding positions include Arg94, Lys98, His100, and 120-128 (EDLISTGGS). Residue Ser124 participates in orotate binding.

It belongs to the purine/pyrimidine phosphoribosyltransferase family. PyrE subfamily. As to quaternary structure, homodimer. Requires Mg(2+) as cofactor.

It carries out the reaction orotidine 5'-phosphate + diphosphate = orotate + 5-phospho-alpha-D-ribose 1-diphosphate. Its pathway is pyrimidine metabolism; UMP biosynthesis via de novo pathway; UMP from orotate: step 1/2. Functionally, catalyzes the transfer of a ribosyl phosphate group from 5-phosphoribose 1-diphosphate to orotate, leading to the formation of orotidine monophosphate (OMP). This Bacillus cereus (strain B4264) protein is Orotate phosphoribosyltransferase.